A 414-amino-acid chain; its full sequence is Multifunctional CCA protein (414 aa).

The ATP site is built by Gly8 and Arg11. 2 residues coordinate CTP: Gly8 and Arg11. Mg(2+) is bound by residues Asp21 and Asp23. ATP contacts are provided by Arg91, Arg137, and Arg140. The CTP site is built by Arg91, Arg137, and Arg140. The region spanning 226 to 327 (TGVHVMMVVD…VTLFERCDAF (102 aa)) is the HD domain.

This sequence belongs to the tRNA nucleotidyltransferase/poly(A) polymerase family. Bacterial CCA-adding enzyme type 1 subfamily. Monomer. Can also form homodimers and oligomers. The cofactor is Mg(2+). It depends on Ni(2+) as a cofactor.

The catalysed reaction is a tRNA precursor + 2 CTP + ATP = a tRNA with a 3' CCA end + 3 diphosphate. The enzyme catalyses a tRNA with a 3' CCA end + 2 CTP + ATP = a tRNA with a 3' CCACCA end + 3 diphosphate. In terms of biological role, catalyzes the addition and repair of the essential 3'-terminal CCA sequence in tRNAs without using a nucleic acid template. Adds these three nucleotides in the order of C, C, and A to the tRNA nucleotide-73, using CTP and ATP as substrates and producing inorganic pyrophosphate. tRNA 3'-terminal CCA addition is required both for tRNA processing and repair. Also involved in tRNA surveillance by mediating tandem CCA addition to generate a CCACCA at the 3' terminus of unstable tRNAs. While stable tRNAs receive only 3'-terminal CCA, unstable tRNAs are marked with CCACCA and rapidly degraded. The polypeptide is Multifunctional CCA protein (Herminiimonas arsenicoxydans).